The primary structure comprises 339 residues: Replication factor C subunit 5 (339 aa).

59–66 contributes to the ATP binding site; that stretch reads GPPGTGKT.

This sequence belongs to the activator 1 small subunits family. As to quaternary structure, subunit of the RFC complex, an heteropentameric complex consisting of a large subunit RFC1 and four small subunits RFC2, RFC3, RFC4 and RFC5; the RFC complex interacts with PCNA. Forms an heterotetrameric complex with RFC2, RFC3 and RFC4; this complex has ATPase activity but is not stimulated by PCNA. The heterotetramer of subunits RFC2, RFC3, RFC4 and RFC5 interacts with RAD17.

It localises to the nucleus. Subunit of the replication factor C (RFC) complex which acts during elongation of primed DNA templates by DNA polymerases delta and epsilon, and is necessary for ATP-dependent loading of proliferating cell nuclear antigen (PCNA) onto primed DNA. This Mus musculus (Mouse) protein is Replication factor C subunit 5 (Rfc5).